Reading from the N-terminus, the 75-residue chain is Alpha-elapitoxin-Bc2a (75 aa).

The first 2 residues, 1–2 (YT), serve as a signal peptide directing secretion. 5 cysteine pairs are disulfide-bonded: cysteine 5-cysteine 24, cysteine 17-cysteine 45, cysteine 30-cysteine 34, cysteine 49-cysteine 60, and cysteine 61-cysteine 66.

Belongs to the three-finger toxin family. Long-chain subfamily. Type II alpha-neurotoxin sub-subfamily. As to quaternary structure, monomer in solution, homodimer in crystal state. As to expression, expressed by the venom gland.

It localises to the secreted. Its function is as follows. Binds to muscular and neuronal nicotinic acetylcholine receptor (nAChR) and inhibits acetylcholine from binding to the receptor, thereby impairing neuromuscular and neuronal transmission. Reversibly blocks chick and mouse muscle nicotinic acetylcholine receptors. Blocks muscle type nAChR with an IC(50)=30 nM, when heterologously expressed in oocytes. Also binds with high affinity to alpha-7/CHRNA7 nAChRs. In addition, shows a weak inhibition of neuronal alpha-3-beta-2/CHRNA3-CHRNB2 nAChR (IC(50)=2.9 uM). Selectively binds to alpha-1-delta subunit interface of the mouse muscle nicotinic acetylcholine receptor, with a 10-fold higher affinity for the adult than for the fetal receptors. In vivo, when intraperitoneally injected into mice, causes flaccid paralysis and respiratory distress, followed by death within 2-4 hours. This Bungarus candidus (Malayan krait) protein is Alpha-elapitoxin-Bc2a.